Consider the following 663-residue polypeptide: Translation factor GUF1 homolog, mitochondrial (663 aa).

In terms of domain architecture, tr-type G spans 64-250 (EKIRNFSIIA…AVIERIPPPP (187 aa)). GTP-binding positions include 73 to 80 (AHIDHGKS), 143 to 147 (DTPGH), and 197 to 200 (NKID).

It belongs to the TRAFAC class translation factor GTPase superfamily. Classic translation factor GTPase family. LepA subfamily.

It localises to the mitochondrion inner membrane. The catalysed reaction is GTP + H2O = GDP + phosphate + H(+). Promotes mitochondrial protein synthesis. May act as a fidelity factor of the translation reaction, by catalyzing a one-codon backward translocation of tRNAs on improperly translocated ribosomes. Binds to mitochondrial ribosomes in a GTP-dependent manner. This Arabidopsis thaliana (Mouse-ear cress) protein is Translation factor GUF1 homolog, mitochondrial.